The primary structure comprises 69 residues: MKRLLILIARAWQLGPSRVLPPSCRYSPSCSQYAIEALEKHGAIKGGWLAAKRLLRCHPWGGHGYDPVP.

The protein belongs to the UPF0161 family.

The protein localises to the cell inner membrane. Functionally, could be involved in insertion of integral membrane proteins into the membrane. This chain is Putative membrane protein insertion efficiency factor, found in Novosphingobium aromaticivorans (strain ATCC 700278 / DSM 12444 / CCUG 56034 / CIP 105152 / NBRC 16084 / F199).